We begin with the raw amino-acid sequence, 1141 residues long: DNA polymerase 120R (1141 aa).

It belongs to the DNA polymerase type-B family.

The catalysed reaction is DNA(n) + a 2'-deoxyribonucleoside 5'-triphosphate = DNA(n+1) + diphosphate. In terms of biological role, DNA-directed DNA polymerase involved in viral DNA replication. The sequence is that of DNA polymerase 120R from Invertebrate iridescent virus 3 (IIV-3).